The chain runs to 559 residues: Proline--tRNA ligase (559 aa).

The protein belongs to the class-II aminoacyl-tRNA synthetase family. ProS type 1 subfamily. Homodimer.

It is found in the cytoplasm. It catalyses the reaction tRNA(Pro) + L-proline + ATP = L-prolyl-tRNA(Pro) + AMP + diphosphate. Catalyzes the attachment of proline to tRNA(Pro) in a two-step reaction: proline is first activated by ATP to form Pro-AMP and then transferred to the acceptor end of tRNA(Pro). As ProRS can inadvertently accommodate and process non-cognate amino acids such as alanine and cysteine, to avoid such errors it has two additional distinct editing activities against alanine. One activity is designated as 'pretransfer' editing and involves the tRNA(Pro)-independent hydrolysis of activated Ala-AMP. The other activity is designated 'posttransfer' editing and involves deacylation of mischarged Ala-tRNA(Pro). The misacylated Cys-tRNA(Pro) is not edited by ProRS. The protein is Proline--tRNA ligase of Ruthia magnifica subsp. Calyptogena magnifica.